A 1064-amino-acid polypeptide reads, in one-letter code: Carbamoyl phosphate synthase large chain (1064 aa).

Positions 1–401 (MPKRNDIKKI…SLLKAVRSLE (401 aa)) are carboxyphosphate synthetic domain. 12 residues coordinate ATP: Arg129, Arg169, Gly175, Gly176, Glu208, Ile210, Glu215, Gly241, Val242, His243, Gln284, and Glu298. The region spanning 133–327 (KELCERIGEP…IAKMSAKIAI (195 aa)) is the ATP-grasp 1 domain. Mg(2+) is bound by residues Gln284, Glu298, and Asn300. Positions 284, 298, and 300 each coordinate Mn(2+). The interval 402–546 (IGVFHNDLQE…YSTYEWENES (145 aa)) is oligomerization domain. Positions 547 to 929 (KRSSKEKIIV…ALYKSFEAAK (383 aa)) are carbamoyl phosphate synthetic domain. The region spanning 671 to 861 (EKALQDLEIP…MAQLATQMIL (191 aa)) is the ATP-grasp 2 domain. Residues Arg707, Ser746, Leu748, Glu752, Gly777, Val778, His779, Ser780, Gln820, and Glu832 each contribute to the ATP site. Mg(2+) is bound by residues Gln820, Glu832, and Asn834. Mn(2+) contacts are provided by Gln820, Glu832, and Asn834. The region spanning 930 to 1064 (LHMADYGSVL…QSRSFTTKNI (135 aa)) is the MGS-like domain. Residues 930 to 1064 (LHMADYGSVL…QSRSFTTKNI (135 aa)) are allosteric domain.

Belongs to the CarB family. As to quaternary structure, composed of two chains; the small (or glutamine) chain promotes the hydrolysis of glutamine to ammonia, which is used by the large (or ammonia) chain to synthesize carbamoyl phosphate. Tetramer of heterodimers (alpha,beta)4. Requires Mg(2+) as cofactor. Mn(2+) serves as cofactor.

It carries out the reaction hydrogencarbonate + L-glutamine + 2 ATP + H2O = carbamoyl phosphate + L-glutamate + 2 ADP + phosphate + 2 H(+). The enzyme catalyses hydrogencarbonate + NH4(+) + 2 ATP = carbamoyl phosphate + 2 ADP + phosphate + 2 H(+). It functions in the pathway amino-acid biosynthesis; L-arginine biosynthesis; carbamoyl phosphate from bicarbonate: step 1/1. Its pathway is pyrimidine metabolism; UMP biosynthesis via de novo pathway; (S)-dihydroorotate from bicarbonate: step 1/3. Large subunit of the glutamine-dependent carbamoyl phosphate synthetase (CPSase). CPSase catalyzes the formation of carbamoyl phosphate from the ammonia moiety of glutamine, carbonate, and phosphate donated by ATP, constituting the first step of 2 biosynthetic pathways, one leading to arginine and/or urea and the other to pyrimidine nucleotides. The large subunit (synthetase) binds the substrates ammonia (free or transferred from glutamine from the small subunit), hydrogencarbonate and ATP and carries out an ATP-coupled ligase reaction, activating hydrogencarbonate by forming carboxy phosphate which reacts with ammonia to form carbamoyl phosphate. The polypeptide is Carbamoyl phosphate synthase large chain (Lactococcus lactis subsp. lactis (strain IL1403) (Streptococcus lactis)).